Consider the following 196-residue polypeptide: Early light-induced protein, chloroplastic (196 aa).

Residues 1 to 48 constitute a chloroplast transit peptide; sequence MAVSSCQSIMSNSMTNISSRSRVNQFTNIPSVYIPTLRRNVSLKVRSM. Positions 47 to 57 are enriched in basic and acidic residues; sequence SMAEGEPKEQS. The disordered stretch occupies residues 47–81; sequence SMAEGEPKEQSKVAVDPTTPTASTPTPQPAYTRPP. A run of 3 helical transmembrane segments spans residues 105 to 125, 132 to 152, and 176 to 196; these read LAMIGFVAAMGVEIAKGQGLS, GVAWFLGTSVLLSLASLIPFF, and IAMLGLVALAFTEFVKGTSLV.

This sequence belongs to the ELIP/psbS family.

It localises to the plastid. The protein resides in the chloroplast membrane. In terms of biological role, probably involved in the integration of pigments into the mature pigment-protein complexes. The sequence is that of Early light-induced protein, chloroplastic from Pisum sativum (Garden pea).